A 230-amino-acid polypeptide reads, in one-letter code: Ribonuclease 3 (230 aa).

Residues 10-133 (DPRLLSRIGY…IIGAIYLDSG (124 aa)) form the RNase III domain. A Mg(2+)-binding site is contributed by E46. D50 is a catalytic residue. Positions 119 and 122 each coordinate Mg(2+). Residue E122 is part of the active site. In terms of domain architecture, DRBM spans 161 to 230 (DPKSRLQEYL…AAEILKLLEQ (70 aa)).

This sequence belongs to the ribonuclease III family. In terms of assembly, homodimer. Mg(2+) is required as a cofactor.

It is found in the cytoplasm. It catalyses the reaction Endonucleolytic cleavage to 5'-phosphomonoester.. Its function is as follows. Digests double-stranded RNA. Involved in the processing of primary rRNA transcript to yield the immediate precursors to the large and small rRNAs (23S and 16S). Processes some mRNAs, and tRNAs when they are encoded in the rRNA operon. Processes pre-crRNA and tracrRNA of type II CRISPR loci if present in the organism. The polypeptide is Ribonuclease 3 (rnc) (Acinetobacter pittii (strain PHEA-2)).